Here is a 234-residue protein sequence, read N- to C-terminus: Potassium/proton antiporter CemA (234 aa).

The next 4 membrane-spanning stretches (helical) occupy residues 8-28 (IPLR…WIPL), 117-137 (TICF…LFIL), 157-177 (ILFV…ELLI), and 193-213 (IILS…FKYW).

Belongs to the CemA family.

The protein resides in the plastid. It localises to the chloroplast inner membrane. The catalysed reaction is K(+)(in) + H(+)(out) = K(+)(out) + H(+)(in). Its function is as follows. Contributes to K(+)/H(+) antiport activity by supporting proton efflux to control proton extrusion and homeostasis in chloroplasts in a light-dependent manner to modulate photosynthesis. Prevents excessive induction of non-photochemical quenching (NPQ) under continuous-light conditions. Indirectly promotes efficient inorganic carbon uptake into chloroplasts. The polypeptide is Potassium/proton antiporter CemA (Citrus sinensis (Sweet orange)).